A 211-amino-acid chain; its full sequence is Proteasome subunit beta 1 (211 aa).

Residues 1–17 constitute a propeptide, removed in mature form; by autocatalysis; that stretch reads MVIMGNELQLENKILKG. Thr18 functions as the Nucleophile in the catalytic mechanism.

It belongs to the peptidase T1B family. As to quaternary structure, the 20S proteasome core is composed of 14 alpha and 14 beta subunits that assemble into four stacked heptameric rings, resulting in a barrel-shaped structure. The two inner rings, each composed of seven catalytic beta subunits, are sandwiched by two outer rings, each composed of seven alpha subunits. The catalytic chamber with the active sites is on the inside of the barrel. Has a gated structure, the ends of the cylinder being occluded by the N-termini of the alpha-subunits. Is capped at one or both ends by the proteasome regulatory ATPase, PAN.

The protein localises to the cytoplasm. It carries out the reaction Cleavage of peptide bonds with very broad specificity.. With respect to regulation, the formation of the proteasomal ATPase PAN-20S proteasome complex, via the docking of the C-termini of PAN into the intersubunit pockets in the alpha-rings, triggers opening of the gate for substrate entry. Interconversion between the open-gate and close-gate conformations leads to a dynamic regulation of the 20S proteasome proteolysis activity. Its function is as follows. Component of the proteasome core, a large protease complex with broad specificity involved in protein degradation. The polypeptide is Proteasome subunit beta 1 (Saccharolobus islandicus (strain M.16.27) (Sulfolobus islandicus)).